Reading from the N-terminus, the 229-residue chain is Histidine biosynthesis bifunctional protein HisIE (229 aa).

Positions Met-1–Val-127 are phosphoribosyl-AMP cyclohydrolase. Positions Val-128–Ser-229 are phosphoribosyl-ATP pyrophosphohydrolase.

This sequence in the N-terminal section; belongs to the PRA-CH family. The protein in the C-terminal section; belongs to the PRA-PH family.

The protein localises to the cytoplasm. The catalysed reaction is 1-(5-phospho-beta-D-ribosyl)-ATP + H2O = 1-(5-phospho-beta-D-ribosyl)-5'-AMP + diphosphate + H(+). It carries out the reaction 1-(5-phospho-beta-D-ribosyl)-5'-AMP + H2O = 1-(5-phospho-beta-D-ribosyl)-5-[(5-phospho-beta-D-ribosylamino)methylideneamino]imidazole-4-carboxamide. Its pathway is amino-acid biosynthesis; L-histidine biosynthesis; L-histidine from 5-phospho-alpha-D-ribose 1-diphosphate: step 2/9. It participates in amino-acid biosynthesis; L-histidine biosynthesis; L-histidine from 5-phospho-alpha-D-ribose 1-diphosphate: step 3/9. This is Histidine biosynthesis bifunctional protein HisIE from Wolinella succinogenes (strain ATCC 29543 / DSM 1740 / CCUG 13145 / JCM 31913 / LMG 7466 / NCTC 11488 / FDC 602W) (Vibrio succinogenes).